Reading from the N-terminus, the 183-residue chain is uncharacterized protein (183 aa).

Low complexity predominate over residues 105–149; it reads YNTNNSNTNTNYNNNNNNNNNNNNNNNNNNNKNNNNNNNNNNSNS. Residues 105–151 are disordered; sequence YNTNNSNTNTNYNNNNNNNNNNNNNNNNNNNKNNNNNNNNNNSNSKI.

This is an uncharacterized protein from Dictyostelium discoideum (Social amoeba).